The following is a 217-amino-acid chain: Ribonuclease T (217 aa).

Residues 20–195 form the Exonuclease domain; it reads VVVDVETAGL…YDTERTAMLF (176 aa). Mg(2+) contacts are provided by D23, E25, H182, and D187. H182 functions as the Proton donor/acceptor in the catalytic mechanism.

Belongs to the RNase T family. Homodimer. Requires Mg(2+) as cofactor.

Its function is as follows. Trims short 3' overhangs of a variety of RNA species, leaving a one or two nucleotide 3' overhang. Responsible for the end-turnover of tRNA: specifically removes the terminal AMP residue from uncharged tRNA (tRNA-C-C-A). Also appears to be involved in tRNA biosynthesis. The chain is Ribonuclease T from Blochmanniella pennsylvanica (strain BPEN).